A 149-amino-acid chain; its full sequence is Large ribosomal subunit protein bL20m (149 aa).

Residues 1–9 (MVFLSAPLW) constitute a mitochondrion transit peptide.

This sequence belongs to the bacterial ribosomal protein bL20 family. In terms of assembly, component of the mitochondrial ribosome large subunit (39S) which comprises a 16S rRNA and about 50 distinct proteins. Interacts with OXA1L.

Its subcellular location is the mitochondrion. The polypeptide is Large ribosomal subunit protein bL20m (MRPL20) (Bos taurus (Bovine)).